Here is a 118-residue protein sequence, read N- to C-terminus: V-type proton ATPase subunit G 1 (118 aa).

Alanine 2 is modified (N-acetylalanine).

Belongs to the V-ATPase G subunit family. In terms of assembly, V-ATPase is a heteromultimeric enzyme made up of two complexes: the ATP-hydrolytic V1 complex and the proton translocation V0 complex. The V1 complex consists of three catalytic AB heterodimers that form a heterohexamer, three peripheral stalks each consisting of EG heterodimers, one central rotor including subunits D and F, and the regulatory subunits C and H. The proton translocation complex V0 consists of the proton transport subunit a, a ring of proteolipid subunits c9c'', rotary subunit d, subunits e and f, and the accessory subunits ATP6AP1/Ac45 and ATP6AP2/PRR. Kidney; localizes to early distal nephron, encompassing thick ascending limbs and distal convoluted tubules (at protein level). Ubiquitous.

The protein resides in the apical cell membrane. Functionally, subunit of the V1 complex of vacuolar(H+)-ATPase (V-ATPase), a multisubunit enzyme composed of a peripheral complex (V1) that hydrolyzes ATP and a membrane integral complex (V0) that translocates protons. V-ATPase is responsible for acidifying and maintaining the pH of intracellular compartments and in some cell types, is targeted to the plasma membrane, where it is responsible for acidifying the extracellular environment. In aerobic conditions, involved in intracellular iron homeostasis, thus triggering the activity of Fe(2+) prolyl hydroxylase (PHD) enzymes, and leading to HIF1A hydroxylation and subsequent proteasomal degradation. This is V-type proton ATPase subunit G 1 (ATP6V1G1) from Homo sapiens (Human).